The sequence spans 268 residues: Short chain dehydrogenase/reductase dpchG (268 aa).

Residues V18, D70, N97, K131, Y165, and K169 each coordinate NADP(+). The active-site Proton acceptor is the Y165. K169 (lowers pKa of active site Tyr) is an active-site residue.

This sequence belongs to the short-chain dehydrogenases/reductases (SDR) family.

Its pathway is secondary metabolite biosynthesis; terpenoid biosynthesis. Short chain dehydrogenase/reductase; part of the gene cluster that mediates the biosynthesis of the diterpenoid pyrones higginsianins A and B. The first step of the pathway is the synthesis of the alpha-pyrone moiety by the polyketide synthase dpchA via condensation of one acetyl-CoA starter unit with 3 malonyl-CoA units and 2 methylations. The alpha-pyrone is then combined with geranylgeranyl pyrophosphate (GGPP) formed by the GGPP synthase dpchD through the action of the prenyltransferase dpchC to yield a linear alpha-pyrone diterpenoid. Subsequent steps in the diterpenoid pyrone biosynthetic pathway involve the decalin core formation, which is initiated by the epoxidation of the C10-C11 olefin by the FAD-dependent oxidoreductase dpchE, and is followed by a cyclization cascade catalyzed by the terpene cyclase dpchB. The short chain dehydrogenase/reductase dpchG then oxidizes the 8S hydroxy group to a ketone and the short chain dehydrogenase/reductase dpchH reduces the ketone to the 8R hydroxy group to yield higginsianin B. Finally, the FAD-dependent oxidoreductase dpchF converts higginsianin B into higginsianin A. The chain is Short chain dehydrogenase/reductase dpchG from Colletotrichum higginsianum (strain IMI 349063) (Crucifer anthracnose fungus).